The primary structure comprises 315 residues: Ribosomal RNA small subunit methyltransferase H (315 aa).

Residues 37–39, D57, F83, D105, and Q112 contribute to the S-adenosyl-L-methionine site; that span reads GGH.

Belongs to the methyltransferase superfamily. RsmH family.

The protein localises to the cytoplasm. It catalyses the reaction cytidine(1402) in 16S rRNA + S-adenosyl-L-methionine = N(4)-methylcytidine(1402) in 16S rRNA + S-adenosyl-L-homocysteine + H(+). Specifically methylates the N4 position of cytidine in position 1402 (C1402) of 16S rRNA. The sequence is that of Ribosomal RNA small subunit methyltransferase H from Pseudomonas fluorescens (strain Pf0-1).